The following is a 239-amino-acid chain: Geranylgeranylglyceryl phosphate synthase (239 aa).

Positions 18 and 45 each coordinate Mg(2+). Sn-glycerol 1-phosphate is bound by residues Tyr166 to Gly172, Gly197 to Gly198, and Gly219 to Thr220.

It belongs to the GGGP/HepGP synthase family. Group II subfamily. Mg(2+) is required as a cofactor.

It is found in the cytoplasm. It carries out the reaction sn-glycerol 1-phosphate + (2E,6E,10E)-geranylgeranyl diphosphate = sn-3-O-(geranylgeranyl)glycerol 1-phosphate + diphosphate. The protein operates within membrane lipid metabolism; glycerophospholipid metabolism. In terms of biological role, prenyltransferase that catalyzes the transfer of the geranylgeranyl moiety of geranylgeranyl diphosphate (GGPP) to the C3 hydroxyl of sn-glycerol-1-phosphate (G1P). This reaction is the first ether-bond-formation step in the biosynthesis of archaeal membrane lipids. This Pyrobaculum arsenaticum (strain DSM 13514 / JCM 11321 / PZ6) protein is Geranylgeranylglyceryl phosphate synthase.